A 358-amino-acid chain; its full sequence is 3-dehydroquinate synthase (358 aa).

Residues 70–75, 104–108, 128–129, K141, K150, and 168–171 contribute to the NAD(+) site; these read DGEKFK, GVVGD, TT, and CLQT. E183, H246, and H263 together coordinate Zn(2+).

The protein belongs to the sugar phosphate cyclases superfamily. Dehydroquinate synthase family. The cofactor is Co(2+). Zn(2+) serves as cofactor. It depends on NAD(+) as a cofactor.

It localises to the cytoplasm. It catalyses the reaction 7-phospho-2-dehydro-3-deoxy-D-arabino-heptonate = 3-dehydroquinate + phosphate. It functions in the pathway metabolic intermediate biosynthesis; chorismate biosynthesis; chorismate from D-erythrose 4-phosphate and phosphoenolpyruvate: step 2/7. Its function is as follows. Catalyzes the conversion of 3-deoxy-D-arabino-heptulosonate 7-phosphate (DAHP) to dehydroquinate (DHQ). The chain is 3-dehydroquinate synthase from Shewanella frigidimarina (strain NCIMB 400).